The sequence spans 480 residues: Adenosylhomocysteinase (480 aa).

Substrate is bound by residues T63, D142, and E203. Residue 204 to 206 (TTT) coordinates NAD(+). Substrate is bound by residues K233 and D237. Residues N238, 267–272 (GYGDVG), E290, N325, 346–348 (IGH), and N394 each bind NAD(+).

The protein belongs to the adenosylhomocysteinase family. NAD(+) is required as a cofactor.

It is found in the cytoplasm. It catalyses the reaction S-adenosyl-L-homocysteine + H2O = L-homocysteine + adenosine. It participates in amino-acid biosynthesis; L-homocysteine biosynthesis; L-homocysteine from S-adenosyl-L-homocysteine: step 1/1. Functionally, may play a key role in the regulation of the intracellular concentration of adenosylhomocysteine. The chain is Adenosylhomocysteinase from Xylella fastidiosa (strain Temecula1 / ATCC 700964).